Consider the following 279-residue polypeptide: MHCHAELRLSSPGQLKAARRRYKTFMIDEILSKETCDYFEKLSLYSVCPSLVVRPKPLHSCTGSPSLRAYPLLSVITRQPTVISHLVPATPGIAQALSCHQVTEAVSAEAPGGEALASSESETEQPTPRQKKPRRSRTIFTELQLMGLEKKFQKQKYLSTPDRLDLAQSLGLTQLQVKTWYQNRRMKWKKMVLKGGQEAPTKPKGRPKKNSIPTSEEIEAEEKMNSQAQGQEQLEPSQGQEELCEAQEPKARDVPLEMAEPPDPPQELPIPSSEPPPLS.

Disordered stretches follow at residues 110 to 137 (APGGEALASSESETEQPTPRQKKPRRSR) and 194 to 279 (KGGQ…PPLS). Residues 118-128 (SSESETEQPTP) show a composition bias toward polar residues. A DNA-binding region (homeobox) is located at residues 133 to 192 (PRRSRTIFTELQLMGLEKKFQKQKYLSTPDRLDLAQSLGLTQLQVKTWYQNRRMKWKKMV). A compositionally biased stretch (polar residues) spans 225-240 (NSQAQGQEQLEPSQGQ). Residues 261–279 (PPDPPQELPIPSSEPPPLS) show a composition bias toward pro residues.

The protein belongs to the BAR homeobox family. In terms of tissue distribution, highly expressed in adult salivary gland and at much lower levels in mammary gland, kidney and placenta.

Its subcellular location is the nucleus. Transcription factor. Binds optimally to the DNA consensus sequence 5'-YYTAATGRTTTTY-3'. May control the expression of neural adhesion molecules such as L1 or Ng-CAM during embryonic development of both the central and peripherical nervous system. May be involved in controlling adhesive processes in keratinizing epithelia. This is Homeobox protein BarH-like 2 (BARX2) from Homo sapiens (Human).